The sequence spans 77 residues: Translational regulator CsrA (77 aa).

This sequence belongs to the CsrA/RsmA family. As to quaternary structure, homodimer; the beta-strands of each monomer intercalate to form a hydrophobic core, while the alpha-helices form wings that extend away from the core.

It localises to the cytoplasm. Functionally, a translational regulator that binds mRNA to regulate translation initiation and/or mRNA stability. Usually binds in the 5'-UTR at or near the Shine-Dalgarno sequence preventing ribosome-binding, thus repressing translation. Its main target seems to be the major flagellin gene, while its function is anatagonized by FliW. The polypeptide is Translational regulator CsrA (Desulfitobacterium hafniense (strain DSM 10664 / DCB-2)).